Consider the following 261-residue polypeptide: Ribosomal RNA small subunit methyltransferase J (261 aa).

S-adenosyl-L-methionine contacts are provided by residues 109–110 (RD), 125–126 (ER), and Asp-179.

Belongs to the methyltransferase superfamily. RsmJ family.

The protein localises to the cytoplasm. The enzyme catalyses guanosine(1516) in 16S rRNA + S-adenosyl-L-methionine = N(2)-methylguanosine(1516) in 16S rRNA + S-adenosyl-L-homocysteine + H(+). Functionally, specifically methylates the guanosine in position 1516 of 16S rRNA. The polypeptide is Ribosomal RNA small subunit methyltransferase J (Pseudomonas aeruginosa (strain UCBPP-PA14)).